A 373-amino-acid chain; its full sequence is LIM domain-binding protein 2 (373 aa).

Disordered regions lie at residues 244–291 (APPA…ANLS) and 327–373 (QYDA…QASQ). A compositionally biased stretch (low complexity) spans 263–280 (STSSTSNSSAGNNANSTG). Residues 298 to 337 (DVMVVGEPTLMGGEFGDEDERLITRLENTQYDAANGMDDE) enclose the LIM interaction domain (LID) domain. Residues 341–361 (NNSPALGNNSPWNSKPPATQE) show a composition bias toward polar residues.

The protein belongs to the LDB family. Interacts with LHX9. Interacts with SLK; leading to negatively regulate SLK kinase activity. Interacts with LMO4. Ubiquitinated by RLIM/RNF12, leading to its degradation by the proteasome.

Its subcellular location is the nucleus. In terms of biological role, transcription cofactor. Binds to the LIM domain of a wide variety of LIM domain-containing transcription factors. This is LIM domain-binding protein 2 (LDB2) from Homo sapiens (Human).